A 162-amino-acid chain; its full sequence is UPF0178 protein Rsph17029_2512 (162 aa).

This sequence belongs to the UPF0178 family.

This is UPF0178 protein Rsph17029_2512 from Cereibacter sphaeroides (strain ATCC 17029 / ATH 2.4.9) (Rhodobacter sphaeroides).